The following is a 234-amino-acid chain: Large ribosomal subunit protein uL1 (234 aa).

This sequence belongs to the universal ribosomal protein uL1 family. As to quaternary structure, part of the 50S ribosomal subunit.

In terms of biological role, binds directly to 23S rRNA. The L1 stalk is quite mobile in the ribosome, and is involved in E site tRNA release. Protein L1 is also a translational repressor protein, it controls the translation of the L11 operon by binding to its mRNA. This Anaeromyxobacter sp. (strain Fw109-5) protein is Large ribosomal subunit protein uL1.